A 77-amino-acid chain; its full sequence is Small ribosomal subunit protein bS16c (77 aa).

It belongs to the bacterial ribosomal protein bS16 family.

It is found in the plastid. It localises to the cyanelle. The protein is Small ribosomal subunit protein bS16c of Cyanophora paradoxa.